The chain runs to 100 residues: Large ribosomal subunit protein eL21 (100 aa).

The segment covering 1–21 has biased composition (basic residues); it reads MVKRTHGYRYKSRKLLRKKPR. Residues 1 to 22 are disordered; it reads MVKRTHGYRYKSRKLLRKKPRE.

The protein belongs to the eukaryotic ribosomal protein eL21 family.

The sequence is that of Large ribosomal subunit protein eL21 from Pyrobaculum neutrophilum (strain DSM 2338 / JCM 9278 / NBRC 100436 / V24Sta) (Thermoproteus neutrophilus).